We begin with the raw amino-acid sequence, 587 residues long: Ankyrin repeat and SOCS box protein 14 (587 aa).

ANK repeat units follow at residues Ile-82–Glu-112, Asn-117–Ala-146, Glu-150–Leu-179, Asn-183–Pro-212, Tyr-216–Leu-245, Asp-248–Ile-277, Ser-281–Ile-310, Ser-313–Phe-342, His-355–Gln-384, Asp-385–Tyr-414, and Cys-416–Arg-449. The SOCS box domain occupies Trp-521–Asp-576.

This sequence belongs to the ankyrin SOCS box (ASB) family. In terms of assembly, interacts with MAPRE2; this interaction promotes MAPRE2 degradation.

The protein operates within protein modification; protein ubiquitination. Its function is as follows. May be a substrate-recognition component of a SCF-like ECS (Elongin-Cullin-SOCS-box protein) E3 ubiquitin-protein ligase complex which mediates the ubiquitination and subsequent proteasomal degradation of target proteins. Plays a role in the inhibition of cardiomyocyte nuclear proliferation by mediating the ubiquitination and degradation of MAPRE2. This chain is Ankyrin repeat and SOCS box protein 14 (ASB14), found in Homo sapiens (Human).